The sequence spans 339 residues: Phenylalanine--tRNA ligase alpha subunit (339 aa).

Residue Glu-254 coordinates Mg(2+).

This sequence belongs to the class-II aminoacyl-tRNA synthetase family. Phe-tRNA synthetase alpha subunit type 1 subfamily. Tetramer of two alpha and two beta subunits. Mg(2+) serves as cofactor.

Its subcellular location is the cytoplasm. It carries out the reaction tRNA(Phe) + L-phenylalanine + ATP = L-phenylalanyl-tRNA(Phe) + AMP + diphosphate + H(+). The chain is Phenylalanine--tRNA ligase alpha subunit from Alkaliphilus oremlandii (strain OhILAs) (Clostridium oremlandii (strain OhILAs)).